A 920-amino-acid chain; its full sequence is Translation initiation factor IF-2 (920 aa).

Basic and acidic residues-rich tracts occupy residues 149–175 (EAEM…EKPV), 186–197 (AEKKATADKAAK), and 255–265 (AKPEGADDKKK). 2 disordered regions span residues 149–197 (EAEM…KAAK) and 245–319 (EAKK…KQRQ). The span at 301–311 (SSGGVGGWRSG) shows a compositional bias: gly residues. A tr-type G domain is found at 418-585 (PRPPVVTVMG…NVLLQAEILE (168 aa)). Residues 427–434 (GHVDHGKT) are G1. Residue 427 to 434 (GHVDHGKT) participates in GTP binding. The tract at residues 452 to 456 (GITQH) is G2. Residues 473 to 476 (DTPG) are G3. GTP-binding positions include 473 to 477 (DTPGH) and 527 to 530 (NKID). The interval 527 to 530 (NKID) is G4. The interval 563 to 565 (SAK) is G5.

The protein belongs to the TRAFAC class translation factor GTPase superfamily. Classic translation factor GTPase family. IF-2 subfamily.

It is found in the cytoplasm. In terms of biological role, one of the essential components for the initiation of protein synthesis. Protects formylmethionyl-tRNA from spontaneous hydrolysis and promotes its binding to the 30S ribosomal subunits. Also involved in the hydrolysis of GTP during the formation of the 70S ribosomal complex. In Polynucleobacter asymbioticus (strain DSM 18221 / CIP 109841 / QLW-P1DMWA-1) (Polynucleobacter necessarius subsp. asymbioticus), this protein is Translation initiation factor IF-2.